A 1388-amino-acid chain; its full sequence is MSRPPPTGKMPGAPEAVSGDGAGASRQRKLEALIRDPRSPINVESLLDGLNPLVLDLDFPALRKNKNIDNFLNRYEKIVKKIRGLQMKAEDYDVVKVIGRGAFGEVQLVRHKASQKVYAMKLLSKFEMIKRSDSAFFWEERDIMAFANSPWVVQLFCAFQDDKYLYMVMEYMPGGDLVNLMSNYDVPEKWAKFYTAEVVLALDAIHSMGLIHRDVKPDNMLLDKHGHLKLADFGTCMKMDETGMVHCDTAVGTPDYISPEVLKSQGGDGYYGRECDWWSVGVFLFEMLVGDTPFYADSLVGTYSKIMDHKNSLCFPEDAEISKHAKNLICAFLTDREVRLGRNGVEEIKQHPFFKNDQWNWDNIRETAAPVVPELSSDIDSSNFDDIEDDKGDVETFPIPKAFVGNQLPFIGFTYYRENLLLSDSPSCKENDSIQSRKNEESQEIQKKLYTLEEHLSTEIQAKEELEQKCKSVNTRLEKVAKELEEEITLRKNVESTLRQLEREKALLQHKNAEYQRKADHEADKKRNLENDVNSLKDQLEDLKKRNQNSQISTEKVNQLQRQLDETNALLRTESDTAARLRKTQAESSKQIQQLESNNRDLQDKNCLLETAKLKLEKEFINLQSVLESERRDRTHGSEIINDLQGRISGLEEDVKNGKILLAKVELEKRQLQERFTDLEKEKNNMEIDMTYQLKVIQQSLEQEETEHKATKARLADKNKIYESIEEAKSEAMKEMEKKLSEERTLKQKVENLLLEAEKRCSILDCDLKQSQQKINELLKQKDVLNEDVRNLTLKIEQETQKRCLTQNDLKMQTQQVNTLKMSEKQLKQENNHLLEMKMSLEKQNAELRKERQDADGQMKELQDQLEAEQYFSTLYKTQVRELKEECEEKTKLCKELQQKKQELQDERDSLAAQLEITLTKADSEQLARSIAEEQYSDLEKEKIMKELEIKEMMARHKQELTEKDATIASLEETNRTLTSDVANLANEKEELNNKLKEAQEQLSRLKDEEISAAAIKAQFEKQLLTERTLKTQAVNKLAEIMNRKEPVKRGNDTDVRRKEKENRKLHMELKSEREKLTQQMIKYQKELNEMQAQIAEESQIRIELQMTLDSKDSDIEQLRSQLQALHIGLDSSSIGSGPGDTEADDGFPESRLEGWLSLPVRNNTKKFGWVKKYVIVSSKKILFYDSEQDKEQSNPYMVLDIDKLFHVRPVTQTDVYRADAKEIPRIFQILYANEGESKKEQEFPVEPVGEKSNYICHKGHEFIPTLYHFPTNCEACMKPLWHMFKPPPALECRRCHIKCHKDHMDKKEEIIAPCKVYYDISSAKNLLLLANSTEEQQKWVSRLVKKIPKKPPAPDPFARSSPRTSMKIQQNQSIRRPSRQLAPNKPS.

The tract at residues 1-24 (MSRPPPTGKMPGAPEAVSGDGAGA) is disordered. The Protein kinase domain maps to 92–354 (YDVVKVIGRG…VEEIKQHPFF (263 aa)). ATP is bound by residues 98-106 (IGRGAFGEV) and Lys121. The active-site Proton acceptor is the Asp214. An AGC-kinase C-terminal domain is found at 357 to 425 (DQWNWDNIRE…YRENLLLSDS (69 aa)). Residues 363–784 (NIRETAAPVV…INELLKQKDV (422 aa)) are interaction with PPP1R12A. The segment at 373–420 (PELSSDIDSSNFDDIEDDKGDVETFPIPKAFVGNQLPFIGFTYYRENL) is interaction with NPM1. Thr414 is subject to Phosphothreonine; by ROCK2. Coiled coils occupy residues 439-1025 (NEES…KQLL) and 1053-1131 (DTDV…IGLD). Positions 497 to 573 (TLRQLEREKA…LDETNALLRT (77 aa)) constitute an REM-1 domain. Over residues 512 to 530 (NAEYQRKADHEADKKRNLE) the composition is skewed to basic and acidic residues. The segment at 512–532 (NAEYQRKADHEADKKRNLEND) is disordered. Residue Tyr722 is modified to Phosphotyrosine; by SRC. In terms of domain architecture, RhoBD spans 979–1047 (TSDVANLANE…LAEIMNRKEP (69 aa)). The tract at residues 979 to 1047 (TSDVANLANE…LAEIMNRKEP (69 aa)) is RHOA binding. At Ser1137 the chain carries Phosphoserine. The region spanning 1150 to 1349 (ESRLEGWLSL…WVSRLVKKIP (200 aa)) is the PH domain. Thr1212 is subject to Phosphothreonine. Residues 1260–1315 (GHEFIPTLYHFPTNCEACMKPLWHMFKPPPALECRRCHIKCHKDHMDKKEEIIAPC) form a Phorbol-ester/DAG-type zinc finger. Residues 1345 to 1388 (VKKIPKKPPAPDPFARSSPRTSMKIQQNQSIRRPSRQLAPNKPS) are disordered. Phosphoserine occurs at positions 1362 and 1374. Positions 1362–1376 (SPRTSMKIQQNQSIR) are enriched in polar residues.

This sequence belongs to the protein kinase superfamily. AGC Ser/Thr protein kinase family. In terms of assembly, homodimer. Interacts with IRS1. Interacts with RAF1. Interacts with RHOA (activated by GTP). Interacts with RHOB and RHOC. Interacts with PPP1R12A. Interacts with EP300. Interacts with CHORDC1. Interacts with BRCA2. Interacts with NPM1; this interaction enhances ROCK2 activity. Interacts with SORL1. Interacts with PJVK. It depends on Mg(2+) as a cofactor. Post-translationally, autophosphorylated. Phosphorylation at Tyr-722 reduces its binding to RHOA and is crucial for focal adhesion dynamics. Dephosphorylation by PTPN11 stimulates its RHOA binding activity. Cleaved by granzyme B during apoptosis. This leads to constitutive activation of the kinase and membrane blebbing. Highly expressed in whole brain and in cerebellum, and at lower levels in heart and lung. Detected at low levels in skeletal muscle, spleen, liver, kidney and pancreas.

Its subcellular location is the cytoplasm. The protein localises to the cell membrane. It is found in the nucleus. It localises to the cytoskeleton. The protein resides in the microtubule organizing center. Its subcellular location is the centrosome. It carries out the reaction L-seryl-[protein] + ATP = O-phospho-L-seryl-[protein] + ADP + H(+). The catalysed reaction is L-threonyl-[protein] + ATP = O-phospho-L-threonyl-[protein] + ADP + H(+). With respect to regulation, activated by RHOA binding. Inhibited by Y-27632. In terms of biological role, protein kinase which is a key regulator of actin cytoskeleton and cell polarity. Involved in regulation of smooth muscle contraction, actin cytoskeleton organization, stress fiber and focal adhesion formation, neurite retraction, cell adhesion and motility via phosphorylation of ADD1, BRCA2, CNN1, EZR, DPYSL2, EP300, MSN, MYL9/MLC2, NPM1, RDX, PPP1R12A and VIM. Phosphorylates SORL1 and IRF4. Acts as a negative regulator of VEGF-induced angiogenic endothelial cell activation. Positively regulates the activation of p42/MAPK1-p44/MAPK3 and of p90RSK/RPS6KA1 during myogenic differentiation. Plays an important role in the timely initiation of centrosome duplication. Inhibits keratinocyte terminal differentiation. May regulate closure of the eyelids and ventral body wall through organization of actomyosin bundles. Plays a critical role in the regulation of spine and synaptic properties in the hippocampus. Plays an important role in generating the circadian rhythm of the aortic myofilament Ca(2+) sensitivity and vascular contractility by modulating the myosin light chain phosphorylation. The polypeptide is Rho-associated protein kinase 2 (ROCK2) (Bos taurus (Bovine)).